A 184-amino-acid chain; its full sequence is MREYKLVVLGSGGVGKSALTVQFVQGIFVEKYDPTIEDSYRKQVEVDAQQCMLEILDTAGTEQFTAMRDLYMKNGQGFALVYSITAQSTFNDLQDLREQILRVKDTDDVPMILVGNKCDLEDERVVGKEQGQNLARQWSNCAFLESSAKSKINVNEIFYDLVRQINRKTPVPGKARKKSSCQLL.

Residue 10-18 participates in GTP binding; it reads GSGGVGKSA. An interaction with KRIT1 region spans residues 25-67; it reads QGIFVEKYDPTIEDSYRKQVEVDAQQCMLEILDTAGTEQFTAM. An Effector region motif is present at residues 32–40; the sequence is YDPTIEDSY. Ser-39 carries the ADP-ribosylserine; by botulinum toxin modification. GTP-binding positions include 57–61, 116–119, and 147–149; these read DTAGT, NKCD, and SAK. Ser-179 carries the phosphoserine; by PKA modification. Cys-181 bears the Cysteine methyl ester mark. The S-geranylgeranyl cysteine moiety is linked to residue Cys-181. Residues 182–184 constitute a propeptide, removed in mature form; sequence QLL.

This sequence belongs to the small GTPase superfamily. Ras family. Heterodimer with RAP1GAP. Interacts with EPAC2. Interacts with SGSM1. Interacts with SGSM2. Interacts with SGSM3. Interacts with KRIT1. Interacts with RAP1GDS1.

The protein resides in the cell membrane. The protein localises to the cytoplasm. It localises to the cytosol. Its subcellular location is the cell junction. It catalyses the reaction GTP + H2O = GDP + phosphate + H(+). Its activity is regulated as follows. Activated by guanine nucleotide-exchange factor (GEF) EPAC2 in a cAMP-dependent manner. GTP-binding protein that possesses intrinsic GTPase activity. Contributes to the polarizing activity of KRIT1 and CDH5 in the establishment and maintenance of correct endothelial cell polarity and vascular lumen. Required for the localization of phosphorylated PRKCZ, PARD3 and TIAM1 to the cell junction. Plays a role in the establishment of basal endothelial barrier function. The sequence is that of Ras-related protein Rap-1b (Rap1b) from Rattus norvegicus (Rat).